The chain runs to 1957 residues: Chromatin modification-related protein EAF1 A (1957 aa).

Disordered stretches follow at residues 108–208 (ASPH…TDLV), 261–287 (NRVSSNSLNTKVDGEPVVRESTAGSKT), 323–373 (GGSP…SHAN), and 449–469 (NQSHRSTAEMQTKEKSSETEK). Over residues 140–151 (SENKSVEGERNL) the composition is skewed to basic and acidic residues. 3 stretches are compositionally biased toward polar residues: residues 261 to 270 (NRVSSNSLNT), 333 to 342 (GQKNSSTQLN), and 355 to 372 (TNRGATGTNGLESESSHA). The HSA domain occupies 563–641 (CGTAPVEVRE…LSNAILQFWS (79 aa)). 2 disordered regions span residues 833-909 (GSNS…AVQK) and 928-950 (AETSGRPKKKKKTHQGSAYDQTW). Residues 884-898 (TDASSGDTSSFQDEY) are compositionally biased toward polar residues. The SANT domain occupies 1049 to 1105 (SGNPWSLFEDQALVVLVHDMGPNWELISDAMNSTLKIKCIYRNPTECKDRHKILMDK). Disordered stretches follow at residues 1107–1131 (AGDGADSAEDSGNSQSYPSTLPGIP), 1282–1314 (TPVLPTSGAHPSTPGSSGVVLSNNLPTTSGLQS), 1344–1367 (LSGRNLQQPSLSTPAAVSGSDRGH), 1449–1644 (QGNS…QQLN), 1687–1768 (PVRP…IAPA), 1804–1840 (ELSKKSQAERMPRVPQSVTNTTQTVSMGTTKGMPQAS), and 1876–1957 (SSNT…TKVE). 6 stretches are compositionally biased toward polar residues: residues 1116-1125 (DSGNSQSYPS), 1290-1314 (AHPSTPGSSGVVLSNNLPTTSGLQS), 1344-1358 (LSGRNLQQPSLSTPA), 1459-1472 (SNLSSGFTNQTTPV), 1479-1492 (LSQQHQMSPQSHVL), and 1501-1510 (QSPSQATGAQ). Low complexity-rich tracts occupy residues 1523-1534 (QRYLQQQQQQQQ) and 1545-1562 (VQQPQGSSVSSSPQNSPQ). Residues 1563-1579 (TQPPVSPQPLSMPPVSP) show a composition bias toward pro residues. Composition is skewed to polar residues over residues 1582 to 1595 (NINAMAQQKPQKSQ), 1604 to 1618 (SPQSGTSGVNNQAGK), 1635 to 1644 (RQPTQGQQLN), 1691 to 1722 (DQQSSVGTTTSTNLQSKPFVSPLSSNHSQQLP), and 1734 to 1758 (QQQMQLHSDNSIQGQSSPATPCNIL). Over residues 1759–1768 (STSSPSIAPA) the composition is skewed to low complexity. Basic and acidic residues predominate over residues 1805 to 1815 (LSKKSQAERMP). Composition is skewed to polar residues over residues 1819–1832 (QSVTNTTQTVSMGT) and 1876–1894 (SSNTDSAGNDPVSTPNQGL). Basic and acidic residues-rich tracts occupy residues 1913–1922 (SEEKRPKLPE) and 1932–1942 (LASEEQPHLEE).

This sequence belongs to the EAF1 family. As to quaternary structure, component of the NuA4 histone acetyltransferase complex. Interacts with ARP4 and SWC4, and (via HSA domain) with TAF14 and TAF14B. Expressed in leaves.

It is found in the nucleus. Its function is as follows. Component of the NuA4 histone acetyltransferase complex which is involved in transcriptional activation of selected genes principally by acetylation of nucleosomal histone H4 and H2A. In Arabidopsis thaliana (Mouse-ear cress), this protein is Chromatin modification-related protein EAF1 A (EAF1A).